A 493-amino-acid chain; its full sequence is 3-octaprenyl-4-hydroxybenzoate carboxy-lyase (493 aa).

N172 is a Mn(2+) binding site. Prenylated FMN contacts are provided by residues I175–R177, R189–L191, and R194–G195. E238 is a binding site for Mn(2+). D287 serves as the catalytic Proton donor.

It belongs to the UbiD family. In terms of assembly, homohexamer. Prenylated FMN is required as a cofactor. Requires Mn(2+) as cofactor.

The protein resides in the cell membrane. The catalysed reaction is a 4-hydroxy-3-(all-trans-polyprenyl)benzoate + H(+) = a 2-(all-trans-polyprenyl)phenol + CO2. It functions in the pathway cofactor biosynthesis; ubiquinone biosynthesis. Functionally, catalyzes the decarboxylation of 3-octaprenyl-4-hydroxy benzoate to 2-octaprenylphenol, an intermediate step in ubiquinone biosynthesis. This chain is 3-octaprenyl-4-hydroxybenzoate carboxy-lyase, found in Shewanella halifaxensis (strain HAW-EB4).